Consider the following 247-residue polypeptide: MHTQVLFEHPLNEKMRTWLRIEFLIQQLSVNLPLADHADALHFFRNIGDLLDVFERGEVRTELLKELERQQRKLQAWVEVPGVDQSRIEALRQQLKTAGSILISAPRIGQQLREDRLIALVRQRLSIPGGCCSFDLPTLHIWLHLPQEQRDAQVETWIASLNPLNQALTLILDLIRNSSPFRKQTSLNGFYQDNGDDADLLRLQLALDSQLYPQISGHKSRFAIRFMPLDSENGLVPERLDFELACC.

Belongs to the ZapD family. Interacts with FtsZ.

Its subcellular location is the cytoplasm. Its function is as follows. Cell division factor that enhances FtsZ-ring assembly. Directly interacts with FtsZ and promotes bundling of FtsZ protofilaments, with a reduction in FtsZ GTPase activity. The protein is Cell division protein ZapD of Citrobacter koseri (strain ATCC BAA-895 / CDC 4225-83 / SGSC4696).